A 97-amino-acid chain; its full sequence is Large ribosomal subunit protein uL23 (97 aa).

Belongs to the universal ribosomal protein uL23 family. As to quaternary structure, part of the 50S ribosomal subunit. Contacts protein L29, and trigger factor when it is bound to the ribosome.

One of the early assembly proteins it binds 23S rRNA. One of the proteins that surrounds the polypeptide exit tunnel on the outside of the ribosome. Forms the main docking site for trigger factor binding to the ribosome. The chain is Large ribosomal subunit protein uL23 from Lactiplantibacillus plantarum (strain ATCC BAA-793 / NCIMB 8826 / WCFS1) (Lactobacillus plantarum).